Consider the following 137-residue polypeptide: Large ribosomal subunit protein uL16 (137 aa).

It belongs to the universal ribosomal protein uL16 family. In terms of assembly, part of the 50S ribosomal subunit.

In terms of biological role, binds 23S rRNA and is also seen to make contacts with the A and possibly P site tRNAs. The polypeptide is Large ribosomal subunit protein uL16 (Alcanivorax borkumensis (strain ATCC 700651 / DSM 11573 / NCIMB 13689 / SK2)).